A 161-amino-acid polypeptide reads, in one-letter code: S-protein homolog 2 (161 aa).

Positions 1–24 (MDIPKQYLSLFILIIFITTKLSQA) are cleaved as a signal peptide. 3 N-linked (GlcNAc...) asparagine glycosylation sites follow: N75, N106, and N157.

Belongs to the plant self-incompatibility (S1) protein family.

It is found in the secreted. In Arabidopsis thaliana (Mouse-ear cress), this protein is S-protein homolog 2.